The sequence spans 1230 residues: Cullin-associated NEDD8-dissociated protein 1 (1230 aa).

A2 is subject to N-acetylalanine. HEAT repeat units follow at residues 2-39, 44-81, 83-119, 131-165, 171-208, 210-247, 248-282, 289-366, 370-407, 424-467, 471-510, and 515-552; these read ASASYHISNLLEKMTSSDKDFRFMATNDLMTELQKDSI, DSERKVVKMILKLLEDKNGEVQNLAVKCLGPLVSKVKE, QVETIVDTLCTNMLSDKEQLRDISSIGLKTVIGELPP, CKKITGRLTSAIAKQEDVSVQLEALDIMADMLSRQ, NFHPSILTCLLPQLTSPRLAVRKRTIIALGHLVMSCGN, VFVDLIEHLLSELSKNDSMSTTRTYIQCIAAISRQAGH, RIGEYLEKIIPLVVKFCNVDDDELREYCIQAFESF, EVYP…TRHE, EFYKTVSPALISRFKEREENVKADVFHAYLSLLKQTRP, PLTM…VLPG, QHIPVLVPGIIFSLNDKSSSSNLKIDALSCLYVILCNHSP, and PHVQALVPPVVACVGDPFYKITSEALLVTQQLVKVIRP. K55 bears the N6-acetyllysine mark. The interval 315-344 is disordered; sequence DEDEDENAMDADGGDDDDQGSDDEYSDDDD. Position 335 is a phosphoserine (S335). At S558 the chain carries Phosphoserine. HEAT repeat units follow at residues 563 to 602, 606 to 643, 646 to 683, 688 to 725, 729 to 768, 770 to 808, 809 to 845, 852 to 889, 890 to 927, 928 to 960, 961 to 998, 1002 to 1039, 1043 to 1097, 1099 to 1133, and 1140 to 1189; these read PYIKDLFTCTIKRLKAADIDQEVKERAISCMGQIICNLGD, SDLPNTLQIFLERLKNEITRLTTVKALTLIAGSPLKID, PVLGEGVPILASFLRKNQRALKLGTLSALDILIKNYSD, AMIDAVLDELPPLISESDMHVSQMAISFLTTLAKVYPS, KISGSILNELIGLVRSPLLQGGALSAMLDFFQALVVTGTN, LGYMDLLRMLTGPVYSQSTALTHKQSYYSIAKCVAALTR, ACPKEGPAVVGQFIQDVKNSRSTDSIRLLALLSLGEV, SGQLELKSVILEAFSSPSEEVKSAASYALGSISVGNLP, EYLPFVLQEITSQPKRQYLLLHSLKEIISSASVVGLKP, YVENIWALLLKHCECAEEGTRNVVAECLGKLTL, IDPETLLPRLKGYLISGSSYARSSVVTAVKFTISDHPQ, PLLKNCIGDFLKTLEDPDLNVRRVALVTFNSAAHNKPS, DLLD…DSCL, RLDIFEFLNHVEDGLKDHYDIKMLTFLMLVRLSTL, and QRLD…IPEA. K971 is modified (N6-acetyllysine).

This sequence belongs to the CAND family. In terms of assembly, interacts with TBP. Part of a complex that contains CUL1 and RBX1. Interacts with unneddylated cullins: interacts with CUL1, CUL2, CUL3, CUL4A, CUL4B and CUL5. Does not bind neddylated CUL1. Interaction with cullins is abolished in presence of COMMD1, which antagonizes with CAND1 for interacting with cullins. Interacts with ERCC6. Interacts with DCUN1D1, DCUN1D2, DCUN1D3, DCUN1D4 and DCUN1D5; these interactions are bridged by cullins and strongly inhibits the neddylation of cullins.

It localises to the cytoplasm. Its subcellular location is the nucleus. In terms of biological role, key assembly factor of SCF (SKP1-CUL1-F-box protein) E3 ubiquitin ligase complexes that promotes the exchange of the substrate-recognition F-box subunit in SCF complexes, thereby playing a key role in the cellular repertoire of SCF complexes. Acts as a F-box protein exchange factor. The exchange activity of CAND1 is coupled with cycles of neddylation conjugation: in the deneddylated state, cullin-binding CAND1 binds CUL1-RBX1, increasing dissociation of the SCF complex and promoting exchange of the F-box protein. Probably plays a similar role in other cullin-RING E3 ubiquitin ligase complexes. The sequence is that of Cullin-associated NEDD8-dissociated protein 1 (CAND1) from Bos taurus (Bovine).